A 240-amino-acid chain; its full sequence is Uridylate kinase (240 aa).

12–15 (KLSG) provides a ligand contact to ATP. The interval 20–25 (GSQGFG) is involved in allosteric activation by GTP. G54 contributes to the UMP binding site. ATP is bound by residues G55 and R59. UMP-binding positions include D74 and 135-142 (TGNPYFST). 2 residues coordinate ATP: Y168 and D171.

Belongs to the UMP kinase family. Homohexamer.

It localises to the cytoplasm. The enzyme catalyses UMP + ATP = UDP + ADP. The protein operates within pyrimidine metabolism; CTP biosynthesis via de novo pathway; UDP from UMP (UMPK route): step 1/1. With respect to regulation, allosterically activated by GTP. Inhibited by UTP. Catalyzes the reversible phosphorylation of UMP to UDP. This chain is Uridylate kinase, found in Desulfitobacterium hafniense (strain Y51).